The chain runs to 336 residues: uncharacterized protein (336 aa).

This is an uncharacterized protein from Alkalihalophilus pseudofirmus (strain ATCC BAA-2126 / JCM 17055 / OF4) (Bacillus pseudofirmus).